Reading from the N-terminus, the 349-residue chain is MDPTNSPQEPPHTSTPGPFDGPQWPHQAPRGMYLSVAVLMGIVVISASVVNGLVIVVSIRYKKLRSPLNYILVNLAMADLLVTLCGSSVSFSNNINGFFVFGKRLCELEGFMVSLTGIVGLWSLAILALERYVVVCRPLGDFRFQHRHAVTGCAFTWVWSLLWTTPPLLGWSSYVPEGLRTSCGPNWYTGGSNNNSYILTLFVTCFVMPLSLILFSYANLLMTLRAAAAQQQESDTTQQAERQVTRMVVAMVMAFLICWLPYTTFALVVATNKDIAIQPALASLPSYFSKTATVYNPIIYVFMNKQFQSCLLKMLCCGHHPRGTGRTAPAAPASPTDGLRNKVTPSHPV.

The segment covering 1–16 (MDPTNSPQEPPHTSTP) has biased composition (polar residues). The segment at 1 to 22 (MDPTNSPQEPPHTSTPGPFDGP) is disordered. The Extracellular portion of the chain corresponds to 1–32 (MDPTNSPQEPPHTSTPGPFDGPQWPHQAPRGM). A helical transmembrane segment spans residues 33–57 (YLSVAVLMGIVVISASVVNGLVIVV). The Cytoplasmic segment spans residues 58 to 69 (SIRYKKLRSPLN). The helical transmembrane segment at 70 to 94 (YILVNLAMADLLVTLCGSSVSFSNN) threads the bilayer. The Extracellular segment spans residues 95–109 (INGFFVFGKRLCELE). Cys-106 and Cys-183 form a disulfide bridge. The chain crosses the membrane as a helical span at residues 110 to 129 (GFMVSLTGIVGLWSLAILAL). The Cytoplasmic portion of the chain corresponds to 130 to 148 (ERYVVVCRPLGDFRFQHRH). A helical transmembrane segment spans residues 149–172 (AVTGCAFTWVWSLLWTTPPLLGWS). At 173 to 196 (SYVPEGLRTSCGPNWYTGGSNNNS) the chain is on the extracellular side. Asn-194 carries an N-linked (GlcNAc...) asparagine glycan. Residues 197 to 224 (YILTLFVTCFVMPLSLILFSYANLLMTL) traverse the membrane as a helical segment. Topologically, residues 225–246 (RAAAAQQQESDTTQQAERQVTR) are cytoplasmic. A helical membrane pass occupies residues 247 to 270 (MVVAMVMAFLICWLPYTTFALVVA). The Extracellular portion of the chain corresponds to 271–278 (TNKDIAIQ). Residues 279 to 303 (PALASLPSYFSKTATVYNPIIYVFM) traverse the membrane as a helical segment. At Lys-290 the chain carries N6-(retinylidene)lysine. Residues 304–349 (NKQFQSCLLKMLCCGHHPRGTGRTAPAAPASPTDGLRNKVTPSHPV) lie on the Cytoplasmic side of the membrane. 2 S-palmitoyl cysteine lipidation sites follow: Cys-316 and Cys-317. Residues 325 to 349 (GRTAPAAPASPTDGLRNKVTPSHPV) form a disordered region.

This sequence belongs to the G-protein coupled receptor 1 family. Opsin subfamily. In terms of processing, phosphorylated on some or all of the serine and threonine residues present in the C-terminal region. As to expression, pineal gland.

Its subcellular location is the membrane. Functionally, produces a slow and prolonged phototransduction response consistent with the non-visual function of pineal photoreception. In Columba livia (Rock dove), this protein is Pinopsin.